The chain runs to 1349 residues: Major capsid protein (1349 aa).

This sequence belongs to the herpesviridae major capsid protein family. Homomultimer. Makes the hexons and eleven out of twelve pentons. Interacts with triplex proteins 1/TRX1 and 2/TRX2; adjacent capsomers are linked together in groups of three by triplexes, heterotrimeric complexes composed of one molecule of TRX1 and two molecules of TRX2. Interacts with scaffold protein; this interaction allows efficient MCP transport to the host nucleus. Interacts with capsid vertex component 2/CVC2. Interacts with the small capsomere-interacting protein/SCP.

It localises to the virion. The protein localises to the host nucleus. Functionally, self-assembles to form an icosahedral capsid with a T=16 symmetry, about 200 nm in diameter, and consisting of 150 hexons and 12 pentons (total of 162 capsomers). Hexons form the edges and faces of the capsid and are each composed of six MCP molecules. In contrast, one penton is found at each of the 12 vertices. Eleven of the pentons are MCP pentamers, while the last vertex is occupied by the portal complex. The capsid is surrounded by a layer of proteinaceous material designated the tegument which, in turn, is enclosed in an envelope of host cell-derived lipids containing virus-encoded glycoproteins. The polypeptide is Major capsid protein (Elephas maximus (Indian elephant)).